Here is a 1383-residue protein sequence, read N- to C-terminus: ATP-dependent RNA helicase TDRD9 (1383 aa).

A disordered region spans residues 35-82 (EAPREEVQRSEEVPNEDPTAQAQVPVKATAPARPASTSGRSLSQRSSE). The segment covering 36–46 (APREEVQRSEE) has biased composition (basic and acidic residues). The span at 70–80 (STSGRSLSQRS) shows a compositional bias: low complexity. The Helicase ATP-binding domain maps to 144 to 310 (ISLIESNSVV…FAVPVQNKMN (167 aa)). An ATP-binding site is contributed by 157 to 164 (GATGSGKS). The short motif at 256–259 (DEVH) is the DEAH box element. Positions 378–545 (SGAQFVSERS…ILKVKLLDMG (168 aa)) constitute a Helicase C-terminal domain. One can recognise a Tudor domain in the interval 945 to 1005 (HPHPDLVCLA…REIPCQFLEL (61 aa)).

It belongs to the DEAD box helicase family. DEAH subfamily. As to quaternary structure, interacts with piRNA-associated proteins PIWIL1 and PIWIL4. As to expression, predominantly expressed in reproductive organs. Detected in mitotic spermatogonia, meiotic spermatocytes (predominantly at the pachytene stage), haploid spermatids in the testis, and in growing oocytes in the ovary (at protein level).

It localises to the cytoplasm. The protein localises to the nucleus. It catalyses the reaction ATP + H2O = ADP + phosphate + H(+). In terms of biological role, ATP-binding RNA helicase which plays a central role during spermatogenesis by repressing transposable elements and preventing their mobilization, which is essential for the germline integrity. Acts via the piRNA metabolic process, which mediates the repression of transposable elements during meiosis by forming complexes composed of piRNAs and Piwi proteins and governs the methylation and subsequent repression of transposons. Acts downstream of piRNA biogenesis: exclusively required for transposon silencing in the nucleus, suggesting that it acts as a nuclear effector in the nucleus together with PIWIL4. This Mus musculus (Mouse) protein is ATP-dependent RNA helicase TDRD9.